The sequence spans 159 residues: Large ribosomal subunit protein uL11 (159 aa).

The protein belongs to the universal ribosomal protein uL11 family. Part of the ribosomal stalk of the 50S ribosomal subunit. Interacts with L10 and the large rRNA to form the base of the stalk. L10 forms an elongated spine to which L12 dimers bind in a sequential fashion forming a multimeric L10(L12)X complex.

Its function is as follows. Forms part of the ribosomal stalk which helps the ribosome interact with GTP-bound translation factors. The polypeptide is Large ribosomal subunit protein uL11 (Nitrosopumilus maritimus (strain SCM1)).